Reading from the N-terminus, the 904-residue chain is Protein translocase subunit SecA (904 aa).

ATP-binding positions include Gln89, 107–111 (GEGKT), and Asp502. 4 residues coordinate Zn(2+): Cys886, Cys888, Cys897, and His898.

It belongs to the SecA family. In terms of assembly, monomer and homodimer. Part of the essential Sec protein translocation apparatus which comprises SecA, SecYEG and auxiliary proteins SecDF-YajC and YidC. It depends on Zn(2+) as a cofactor.

Its subcellular location is the cell inner membrane. The protein localises to the cytoplasm. The enzyme catalyses ATP + H2O + cellular proteinSide 1 = ADP + phosphate + cellular proteinSide 2.. Functionally, part of the Sec protein translocase complex. Interacts with the SecYEG preprotein conducting channel. Has a central role in coupling the hydrolysis of ATP to the transfer of proteins into and across the cell membrane, serving both as a receptor for the preprotein-SecB complex and as an ATP-driven molecular motor driving the stepwise translocation of polypeptide chains across the membrane. The protein is Protein translocase subunit SecA of Rhizobium etli (strain CIAT 652).